We begin with the raw amino-acid sequence, 440 residues long: Xylose isomerase (440 aa).

Active-site residues include His100 and Asp103. Mg(2+) contacts are provided by Glu231, Glu267, His270, Asp295, Asp306, Asp308, and Asp338.

Belongs to the xylose isomerase family. Homotetramer. Requires Mg(2+) as cofactor.

The protein localises to the cytoplasm. It carries out the reaction alpha-D-xylose = alpha-D-xylulofuranose. This Burkholderia vietnamiensis (strain G4 / LMG 22486) (Burkholderia cepacia (strain R1808)) protein is Xylose isomerase.